Consider the following 249-residue polypeptide: Phosphonates import ATP-binding protein PhnC (249 aa).

One can recognise an ABC transporter domain in the interval 2-246; it reads IEFKKVEKVW…KLNESKLEEI (245 aa). 35 to 42 provides a ligand contact to ATP; sequence GLSGAGKT.

The protein belongs to the ABC transporter superfamily. Phosphonates importer (TC 3.A.1.9.1) family. As to quaternary structure, the complex is composed of two ATP-binding proteins (PhnC), two transmembrane proteins (PhnE) and a solute-binding protein (PhnD).

Its subcellular location is the cell membrane. It carries out the reaction phosphonate(out) + ATP + H2O = phosphonate(in) + ADP + phosphate + H(+). In terms of biological role, part of the ABC transporter complex PhnCDE involved in phosphonates import. Responsible for energy coupling to the transport system. This is Phosphonates import ATP-binding protein PhnC from Mesoplasma florum (strain ATCC 33453 / NBRC 100688 / NCTC 11704 / L1) (Acholeplasma florum).